A 103-amino-acid chain; its full sequence is EGGEPCACPHALHRVCGSDGETYSNPCTLNCAKFNGKPELVKVHDGPCEPDEDEDVCQECDGDEYKPVCGSDDITYDNNCRLECASISSSPGVELKHEGPCRT.

Kazal-like domains follow at residues 1 to 50 and 51 to 103; these read EGGE…PCEP and DEDE…PCRT. 6 disulfide bridges follow: cysteine 6-cysteine 31, cysteine 8-cysteine 27, cysteine 16-cysteine 48, cysteine 57-cysteine 84, cysteine 60-cysteine 80, and cysteine 69-cysteine 101.

The protein localises to the secreted. Its function is as follows. Thrombin-specific inhibitor. Appears to form 1:1 complexes with thrombin. Prevents blood clotting to allow the insect to feed on blood. This chain is Thrombin inhibitor rhodniin, found in Rhodnius prolixus (Triatomid bug).